Here is a 341-residue protein sequence, read N- to C-terminus: GDP-mannose transporter GONST5 (341 aa).

8 helical membrane-spanning segments follow: residues 17–37 (LSIL…KWIF), 44–64 (FPLS…YIVI), 89–109 (FVFC…PVSF), 141–161 (LVPI…FNVF), 192–212 (INTV…PAFL), 233–253 (IILF…FYVI), 260–280 (TFNV…WMIF), and 284–304 (ISPM…FYGY). The 120-residue stretch at 33–152 (NKWIFQKLDF…PIVGGILLTS (120 aa)) folds into the EamA domain.

The protein belongs to the TPT transporter family. TPT (TC 2.A.7.9) subfamily. Expressed in rosette leaves, flowers and siliques.

It is found in the golgi apparatus membrane. In terms of biological role, GDP-mannose transporter that may be involved in the import of GDP-mannose from the cytoplasm into the Golgi lumen. The protein is GDP-mannose transporter GONST5 (GONST5) of Arabidopsis thaliana (Mouse-ear cress).